The primary structure comprises 202 residues: Large ribosomal subunit protein bL25 (202 aa).

It belongs to the bacterial ribosomal protein bL25 family. CTC subfamily. In terms of assembly, part of the 50S ribosomal subunit; part of the 5S rRNA/L5/L18/L25 subcomplex. Contacts the 5S rRNA. Binds to the 5S rRNA independently of L5 and L18.

Its function is as follows. This is one of the proteins that binds to the 5S RNA in the ribosome where it forms part of the central protuberance. This is Large ribosomal subunit protein bL25 from Nitrosomonas eutropha (strain DSM 101675 / C91 / Nm57).